Reading from the N-terminus, the 190-residue chain is Peptidyl-tRNA hydrolase (190 aa).

TRNA is bound at residue Tyr-18. Catalysis depends on His-23, which acts as the Proton acceptor. TRNA is bound by residues Phe-69, Asn-71, and Asn-117.

This sequence belongs to the PTH family. In terms of assembly, monomer.

The protein localises to the cytoplasm. It carries out the reaction an N-acyl-L-alpha-aminoacyl-tRNA + H2O = an N-acyl-L-amino acid + a tRNA + H(+). Hydrolyzes ribosome-free peptidyl-tRNAs (with 1 or more amino acids incorporated), which drop off the ribosome during protein synthesis, or as a result of ribosome stalling. Its function is as follows. Catalyzes the release of premature peptidyl moieties from peptidyl-tRNA molecules trapped in stalled 50S ribosomal subunits, and thus maintains levels of free tRNAs and 50S ribosomes. The polypeptide is Peptidyl-tRNA hydrolase (Rhodococcus jostii (strain RHA1)).